The following is an 87-amino-acid chain: Large ribosomal subunit protein bL27 (87 aa).

The disordered stretch occupies residues 1–25; the sequence is MAHKKGASSSRNGRDSNAQRLGVKR. Polar residues predominate over residues 7–19; that stretch reads ASSSRNGRDSNAQ.

It belongs to the bacterial ribosomal protein bL27 family.

The protein is Large ribosomal subunit protein bL27 of Rhodococcus opacus (strain B4).